Consider the following 232-residue polypeptide: Large ribosomal subunit protein uL1 (232 aa).

It belongs to the universal ribosomal protein uL1 family. Part of the 50S ribosomal subunit.

Its function is as follows. Binds directly to 23S rRNA. The L1 stalk is quite mobile in the ribosome, and is involved in E site tRNA release. In terms of biological role, protein L1 is also a translational repressor protein, it controls the translation of the L11 operon by binding to its mRNA. The protein is Large ribosomal subunit protein uL1 of Bacteroides fragilis (strain ATCC 25285 / DSM 2151 / CCUG 4856 / JCM 11019 / LMG 10263 / NCTC 9343 / Onslow / VPI 2553 / EN-2).